A 185-amino-acid polypeptide reads, in one-letter code: Large ribosomal subunit protein uL22 (185 aa).

It belongs to the universal ribosomal protein uL22 family.

The sequence is that of Large ribosomal subunit protein uL22 (RPL17) from Debaryomyces hansenii (strain ATCC 36239 / CBS 767 / BCRC 21394 / JCM 1990 / NBRC 0083 / IGC 2968) (Yeast).